Consider the following 245-residue polypeptide: Gem-associated protein 2 (245 aa).

This sequence belongs to the gemin-2 family. Component of the core survival motor neuron (SMN) complex composed of Smn, Gem2, Gem3, rig/Gem5 and one of 3 almost identical Gem4 paralogs encoded by Glos/Gem4a, Gem4b or Gem4c. Part of a minimal SMN complex composed of Smn and Gem2 only; this complex is active in UsnRNP assembly. The SMN complex associates with the entire set of spliceosomal snRNP Sm proteins, SmB, SmD1, SmD2, SmD3, SmE, SmF and SmG, and with the snRNP-specific proteins snRNP-U1-70K, U2A, snf/U1A and U5-116KD. Expressed in nurse cells and oocytes.

The protein localises to the cytoplasm. It localises to the U-body. Functionally, component of the survival motor neuron (SMN) complex that catalyzes the assembly of small nuclear ribonucleoproteins (snRNPs), the building blocks of the spliceosome, and thereby plays an important role in the splicing of cellular pre-mRNAs. Most spliceosomal snRNPs contain a common set of Sm proteins SNRPB, SNRPD1, SNRPD2, SNRPD3, SNRPE, SNRPF and SNRPG that assemble in a heptameric protein ring on the Sm site of the small nuclear RNA to form the core snRNP (Sm core). In the cytosol, the Sm proteins SNRPD1, SNRPD2, SNRPE, SNRPF and SNRPG (5Sm) are trapped in an inactive 6S pICln-Sm complex by the chaperone CLNS1A that controls the assembly of the core snRNP. To assemble core snRNPs, the SMN complex accepts the trapped 5Sm proteins from CLNS1A. Binding of snRNA inside 5Sm ultimately triggers eviction of the SMN complex, thereby allowing binding of SNRPD3 and SNRPB to complete assembly of the core snRNP. Within the SMN complex, GEMIN2 constrains the conformation of 5Sm, thereby promoting 5Sm binding to snRNA containing the snRNP code (a nonameric Sm site and a 3'-adjacent stem-loop), thus preventing progression of assembly until a cognate substrate is bound. Involved in adult motor function. The polypeptide is Gem-associated protein 2 (Drosophila melanogaster (Fruit fly)).